Reading from the N-terminus, the 269-residue chain is Signal recognition particle receptor subunit beta (269 aa).

The chain crosses the membrane as a helical span at residues 35-55 (LLSVAVALLAVLLTLVFWKFI). Residues 69–77 (GLCDSGKTL) and 90–93 (TQTS) contribute to the GTP site. At serine 110 the chain carries Phosphoserine. Residues glycine 118 and 178–181 (NKQD) contribute to the GTP site. Position 212 is a phosphothreonine (threonine 212). Alanine 246 is a GTP binding site.

It belongs to the SRP receptor beta subunit family. As to quaternary structure, heterodimer with SRPRA.

Its subcellular location is the endoplasmic reticulum membrane. In terms of biological role, component of the SRP (signal recognition particle) receptor. Ensures, in conjunction with the signal recognition particle, the correct targeting of the nascent secretory proteins to the endoplasmic reticulum membrane system. May mediate the membrane association of SR. The chain is Signal recognition particle receptor subunit beta (Srprb) from Mus musculus (Mouse).